The chain runs to 219 residues: ER lumen protein-retaining receptor (219 aa).

Topologically, residues 1-5 (MNPFR) are lumenal. A helical transmembrane segment spans residues 6-26 (ILGDLSHLTSILILIHNIKTT). Topologically, residues 27 to 37 (RYIEGISFKTQ) are cytoplasmic. 2 helical membrane-spanning segments follow: residues 38–58 (TLYA…HWVS) and 59–79 (LYNA…VVLL). The Cytoplasmic portion of the chain corresponds to 80–98 (QGSKRTNTIAYNEMLMHDT). Residues 99 to 116 (FKIQHLLIGSALMSVFFH) traverse the membrane as a helical segment. The Lumenal segment spans residues 117 to 118 (HK). The helical transmembrane segment at 119–139 (FTFLELAWSFSVWLESVAILP) threads the bilayer. Residues 140-152 (QLYMLSKGGKTRS) are Cytoplasmic-facing. The chain crosses the membrane as a helical span at residues 153–173 (LTVHYIFAMGLYRALYIPNWI). Topologically, residues 174-185 (WRYSTEDKKLDK) are lumenal. A helical membrane pass occupies residues 186–206 (IAFFAGLLQTLLYSDFFYIYY). The Cytoplasmic portion of the chain corresponds to 207–219 (TKVIRGKGFKLPK).

It belongs to the ERD2 family.

It is found in the endoplasmic reticulum membrane. In terms of biological role, required for the retention of luminal endoplasmic reticulum proteins. Determines the specificity of the luminal ER protein retention system. Also required for normal vesicular traffic through the Golgi. This receptor strongly recognizes H-D-E-L and weakly recognizes D-D-E-L and K-D-E-L. This chain is ER lumen protein-retaining receptor, found in Saccharomyces cerevisiae (strain ATCC 204508 / S288c) (Baker's yeast).